Consider the following 120-residue polypeptide: Large ribosomal subunit protein uL22 (120 aa).

Belongs to the universal ribosomal protein uL22 family. Part of the 50S ribosomal subunit.

In terms of biological role, this protein binds specifically to 23S rRNA; its binding is stimulated by other ribosomal proteins, e.g. L4, L17, and L20. It is important during the early stages of 50S assembly. It makes multiple contacts with different domains of the 23S rRNA in the assembled 50S subunit and ribosome. The globular domain of the protein is located near the polypeptide exit tunnel on the outside of the subunit, while an extended beta-hairpin is found that lines the wall of the exit tunnel in the center of the 70S ribosome. The chain is Large ribosomal subunit protein uL22 from Acaryochloris marina (strain MBIC 11017).